Consider the following 585-residue polypeptide: MNVFKNFEQKIKKSLKESDIKGKNGENLDLSKITVDPPRDSLHGDLSTNASMVLAKSVGLNPRTLAEKIIALLKDDPSIDHLEVAGSGFINIKLTKSFWHDVLKLMITSGTDYGRTQIGQGKQVNVEYVSANPTGPMHVGHCRGAVVGDVLANLLQFAGYNVTKEYYINDAGKQIEILAASVLLRYREALGETINKIPEGLYPGEYLIPLGQSLVQEFGDKLLTMDNEKALSIVKERSIDAMMTMIRQDLATLNIHHDVFFSERMLYMNNAQAIRNTINDLTLNGYVYKGKLSPPKGQTLEDWEPHEQTLFRSTDVGDDQDRVLIKSDGSYTYFAADVAYFRDKFHRHFDEMIYVLGADHAGYVKRLEAVAKAISGNKAKLTAFLCQLVKLFRNGHPVRMSKREGSFITLRDVVKEVGRDPVRFMMLYRKCEAPLDFDLEKVTEQSKDNPIFYVQYAHARCHSVFRQAQENLQIENPSNDLMIAHLDQLTNDSEISLIHKLAQYPRIIEQAIVYKEPHRLAFYLYDLASNFHGHWNKGNDNPELRFIKPNNKKLSLARLGLVQAFINVLSSGLKIVEVKAPTEMR.

A 'HIGH' region motif is present at residues 131-141 (ANPTGPMHVGH).

Belongs to the class-I aminoacyl-tRNA synthetase family. As to quaternary structure, monomer.

Its subcellular location is the cytoplasm. The enzyme catalyses tRNA(Arg) + L-arginine + ATP = L-arginyl-tRNA(Arg) + AMP + diphosphate. This chain is Arginine--tRNA ligase, found in Bartonella bacilliformis (strain ATCC 35685 / KC583 / Herrer 020/F12,63).